A 178-amino-acid chain; its full sequence is Large ribosomal subunit protein uL13m (178 aa).

This sequence belongs to the universal ribosomal protein uL13 family. As to quaternary structure, component of the mitochondrial ribosome large subunit (39S) which comprises a 16S rRNA and about 50 distinct proteins. Interacts with OXA1L.

The protein resides in the mitochondrion. This Bos taurus (Bovine) protein is Large ribosomal subunit protein uL13m (MRPL13).